The following is a 1086-amino-acid chain: MDSITNGESFYVYDWRVVSTEKDTNYFDRSGNRKKWTEITLMLRAYCVDANGATVCLRMGQVKTKLYVEFPENYDLNPRRWSAIRTILKDAIYCKNDKCDSNIQRVSLQPLYGAKQVRTYVAIEFTSEVGKRAFINKISGKCDQRTKRTSAKFPDNVTGDQLRFHWMNVPTELQVLVNAKLPFAGWIETGRLYSPKDRKTRCDREYSVDIKQVRTSTSMACVTPPLKTFAWDIEAKINDMSSPGTHEDDEVYMISISVSDNTDHLILIAPDGCGEAMKRSMGAGDELTVHVCPNEVSLLLEFNKVCRSIGAVARMGWNVNRFDCVVLMARANRLNCSTTLLDLGLALDVPGCVSTTAGRTFGRFSPNDAIYFDTHGVLCLDVMEMFKSTYTKLPKYSLQYVSQKFLGTTKDPVTLKDLNELHSRLMLDDDHTNALRAVVSKYCVVDSRLTLQLCQKCAHMTSLTEMARITNTPITMVHYQKQQRRMFHLMFSECARKGVAMQDDFGRDRRLTMLDEDSTDGSSNVDNKRQLNYSGAYVKDPEPGLYNMVGSLDVNSMYPTLMIAYNLCYSTVIDDDAHSDYTDENFEIVEWEDHVGCEHDPNIKEREKLKSIFEDLAKVEKRKFIGVQPITKYFKPTSTTRKPVDDVEEHSECNGFTDDNYNDSPVSSIKLSSVDLQRAAIRLKVLKSRMSGGSKLCAKQRVRILKTRRGLLPDLVEYFLDARRKVRAEMKNVSDPLARDILDKSQLAYKVTANSVYGSTGAVNGKLPCQNVAKVTTALGRKTILQSIDIAQRDRSVSTIYSDTDSMYVQLGDEAGDDPWKFVRELAAHITSKLRKPMVIEAEDDIHAKVLFLGKKCYIGRKLFRDGSVSRELDWHGVITVRRDHSQYVKDVYRKAVHRVFADCTMEQFKHTIFEQALTLMQRRVSYERLTKTSEVRNVGDCCTITLCKKTMSWMLGDYKVPQHSHHDILYNTKRDALKTYYVSKLPAPARLSVSLVDRGRPAIEGGRIEFLNIRISNPDDLPIEEISYFKEHGGIVDRLYYIKQIINPLTKVSEAVWKRSDTVIGAVTPILNYDKVVRQLDTMFN.

The segment at 638–657 (STTRKPVDDVEEHSECNGFT) is disordered.

This sequence belongs to the DNA polymerase type-B family.

The catalysed reaction is DNA(n) + a 2'-deoxyribonucleoside 5'-triphosphate = DNA(n+1) + diphosphate. In terms of biological role, replicates the viral genome. Host DNA polymerases cannot substitute for the viral enzyme in this process. The protein is DNA polymerase of Noctuidae (owlet moths).